A 320-amino-acid polypeptide reads, in one-letter code: Short-chain dehydrogenase/reductase ARMGADRAFT_1169971 (320 aa).

Residues lysine 19–alanine 39 traverse the membrane as a helical segment. Isoleucine 30, aspartate 78, asparagine 105, and lysine 136 together coordinate NADP(+). N-linked (GlcNAc...) asparagine glycosylation is present at asparagine 157. The active-site Proton donor is the serine 159. Tyrosine 192, lysine 196, valine 227, and serine 229 together coordinate NADP(+). Residue tyrosine 192 is the Proton acceptor of the active site. Catalysis depends on lysine 196, which acts as the Lowers pKa of active site Tyr. Residues leucine 235–serine 255 form a helical membrane-spanning segment.

Belongs to the short-chain dehydrogenases/reductases (SDR) family.

It localises to the membrane. It participates in secondary metabolite biosynthesis. Its function is as follows. Short-chain dehydrogenase/reductase, part of the gene cluster that mediates the biosynthesis of melleolides, a range of antifungal and phytotoxic polyketide derivatives composed of an orsellinic acid (OA) moiety esterified to various sesquiterpene alcohols. The first step in melleolides biosynthesis is performed by the delta(6)-protoilludene synthase PRO1 which catalyzes the cyclization of farnesyl diphosphate to protoilludene. The orsellinic acid synthase armB produces OA by condensing acetyl-CoA with 3 malonyl-CoA units in a three-round chain elongation reaction folowed by a C2-C7 ring closure. ArmB further catalyzes the trans-esterification of OA to the various sesquiterpene alcohols resulting from the hydroxylation of protoilludene. The melleolides cluster also includes 5 cytochrome P450 monooxygenases, 4 NAD(+)-dependent oxidoreductases, one flavin-dependent oxidoreductase, and one O-methyltransferase. The cytochrome P450 monooxygenases may be involved in protoilludene hydroxylation to elaborate melleolides with multiple alcohol groups, such as melleolide D, which carries alcohol functionalities at C-4, C-5, C-10, and C-13. The role of the NAD(+)-dependent enzymes remains unknown. Numerous melleolides, including arnamial, show 5'-O-methylation of the aromatic moiety which may be catalyzed by the methyltransferase encoded in the cluster. The flavin-dependent oxidoreductase might represent the dehydrogenase yielding the aldehyde in position 1 of arnamial and other melleolides. Finally, several halogenase localized outside of the cluster, are able to catalyze the transfer of a single chlorine atom to the melleolide backbone, resulting in a 6'-chloromelleolide product. The chain is Short-chain dehydrogenase/reductase ARMGADRAFT_1169971 from Armillaria gallica (Bulbous honey fungus).